A 262-amino-acid chain; its full sequence is MIVVKIGGRVVKNALQNVIESVLRYPGKLILVHGGGDIVSEYTKRMGMEPTFVTSPEGIRSRYTSKEELDIYVMTMGLINKNIVTQLISKGKTAIGITGVDGGSVIGTRKKRIMILDERGKKRIIDGGYTGKIVSVNSQLISSLTSLVDVIVISPIALDTEESTPLNVDGDQMAFNVARAVKAEALLLLSDVDGVLLNNAVVKKLSKEEAKELATKIGPGMNRKVLMAAESVESGVSKVIIGSGLVPDAINSALAGRGTEIS.

Residues 35–36 (GG), arginine 62, and asparagine 167 each bind substrate.

This sequence belongs to the acetylglutamate kinase family. LysZ subfamily.

The protein resides in the cytoplasm. The catalysed reaction is [amino-group carrier protein]-C-terminal-N-(1,4-dicarboxybutan-1-yl)-L-glutamine + ATP = [amino-group carrier protein]-C-terminal-N-(1-carboxy-5-phosphooxy-5-oxopentan-1-yl)-L-glutamine + ADP. The enzyme catalyses [amino-group carrier protein]-C-terminal-gamma-(L-glutamyl)-L-glutamate + ATP = [amino-group carrier protein]-C-terminal-gamma-(5-phospho-L-glutamyl)-L-glutamate + ADP. Its pathway is amino-acid biosynthesis; L-lysine biosynthesis via AAA pathway; L-lysine from L-alpha-aminoadipate (Thermus route): step 2/5. It participates in amino-acid biosynthesis; L-arginine biosynthesis. Functionally, involved in both the arginine and lysine biosynthetic pathways. Phosphorylates the LysW-bound precursors glutamate (for arginine biosynthesis), respectively alpha-aminoadipate (for lysine biosynthesis). This chain is [LysW]-aminoadipate/[LysW]-glutamate kinase, found in Metallosphaera sedula (strain ATCC 51363 / DSM 5348 / JCM 9185 / NBRC 15509 / TH2).